Reading from the N-terminus, the 289-residue chain is tRNA-cytidine(32) 2-sulfurtransferase (289 aa).

The short motif at 39-44 (SGGKDS) is the PP-loop motif element. C114, C117, and C205 together coordinate [4Fe-4S] cluster.

The protein belongs to the TtcA family. Homodimer. Mg(2+) serves as cofactor. The cofactor is [4Fe-4S] cluster.

It is found in the cytoplasm. It catalyses the reaction cytidine(32) in tRNA + S-sulfanyl-L-cysteinyl-[cysteine desulfurase] + AH2 + ATP = 2-thiocytidine(32) in tRNA + L-cysteinyl-[cysteine desulfurase] + A + AMP + diphosphate + H(+). The protein operates within tRNA modification. Its function is as follows. Catalyzes the ATP-dependent 2-thiolation of cytidine in position 32 of tRNA, to form 2-thiocytidine (s(2)C32). The sulfur atoms are provided by the cysteine/cysteine desulfurase (IscS) system. The chain is tRNA-cytidine(32) 2-sulfurtransferase from Deinococcus geothermalis (strain DSM 11300 / CIP 105573 / AG-3a).